The chain runs to 327 residues: Acetyl-coenzyme A carboxylase carboxyl transferase subunit alpha (327 aa).

Residues 46 to 299 enclose the CoA carboxyltransferase C-terminal domain; the sequence is LEARAIQLRR…RQVLLRHLKD (254 aa).

This sequence belongs to the AccA family. In terms of assembly, acetyl-CoA carboxylase is a heterohexamer composed of biotin carboxyl carrier protein (AccB), biotin carboxylase (AccC) and two subunits each of ACCase subunit alpha (AccA) and ACCase subunit beta (AccD).

The protein localises to the cytoplasm. It catalyses the reaction N(6)-carboxybiotinyl-L-lysyl-[protein] + acetyl-CoA = N(6)-biotinyl-L-lysyl-[protein] + malonyl-CoA. It participates in lipid metabolism; malonyl-CoA biosynthesis; malonyl-CoA from acetyl-CoA: step 1/1. In terms of biological role, component of the acetyl coenzyme A carboxylase (ACC) complex. First, biotin carboxylase catalyzes the carboxylation of biotin on its carrier protein (BCCP) and then the CO(2) group is transferred by the carboxyltransferase to acetyl-CoA to form malonyl-CoA. This chain is Acetyl-coenzyme A carboxylase carboxyl transferase subunit alpha, found in Synechococcus elongatus (strain ATCC 33912 / PCC 7942 / FACHB-805) (Anacystis nidulans R2).